A 313-amino-acid polypeptide reads, in one-letter code: 2-phosphoglycerate kinase (313 aa).

One can recognise an ATP-cone domain in the interval 8-95; sequence SRILVKDKEY…LWRRVLKKHS (88 aa).

Belongs to the 2-phosphoglycerate kinase family. Requires a divalent metal cation as cofactor.

The catalysed reaction is (2R)-2-phosphoglycerate + ATP = (2R)-2,3-bisphosphoglycerate + ADP + H(+). It participates in thermoadapter biosynthesis; cyclic 2,3-diphosphoglycerate biosynthesis; cyclic 2,3-diphosphoglycerate from 2-phospho-D-glycerate: step 1/2. Catalyzes the phosphorylation of 2-phosphoglycerate to 2,3-diphosphoglycerate. Involved in the biosynthesis of cyclic 2,3-bisphosphoglycerate, a thermoprotectant. In Methanococcus maripaludis (strain C5 / ATCC BAA-1333), this protein is 2-phosphoglycerate kinase.